A 174-amino-acid chain; its full sequence is Calcineurin subunit B (174 aa).

4 consecutive EF-hand domains span residues 21-56 (EEIE…SSNP), 60-88 (RLMD…FSGK), 90-125 (SKLD…MVGK), and 131-166 (ELQQ…KSVA). Positions 34, 36, 38, 40, 45, 66, 68, 70, 72, 77, 103, 105, 107, 109, 114, 144, 146, 148, 150, and 155 each coordinate Ca(2+).

The protein belongs to the calcineurin regulatory subunit family. Composed of a catalytic subunit (A) and a regulatory subunit (B).

Its function is as follows. Regulatory subunit of calcineurin, a calcium-dependent, calmodulin stimulated protein phosphatase. Confers calcium sensitivity. This Debaryomyces hansenii (strain ATCC 36239 / CBS 767 / BCRC 21394 / JCM 1990 / NBRC 0083 / IGC 2968) (Yeast) protein is Calcineurin subunit B (CNB1).